The following is a 392-amino-acid chain: Speckle-type POZ protein-like (392 aa).

Positions 31 to 161 (KFSYMWTINN…DDKLTLFCEV (131 aa)) constitute an MATH domain. In terms of domain architecture, BTB spans 200 to 267 (TDCSFFVRGQ…IYTGRAPNLD (68 aa)).

Belongs to the Tdpoz family. Homodimer. Heterodimer with SPOP. Component of cullin-RING-based BCR (BTB-CUL3-RBX1) E3 ubiquitin-protein ligase complexes containing homodimeric SPOPL or the heterodimer formed by SPOP and SPOPL. Interacts with CUL3 and MACROH2A1.

It is found in the nucleus. Its pathway is protein modification; protein ubiquitination. Functionally, component of a cullin-RING-based BCR (BTB-CUL3-RBX1) E3 ubiquitin-protein ligase complex that mediates the ubiquitination and subsequent proteasomal degradation of target proteins, but with relatively low efficiency. Cullin-RING-based BCR (BTB-CUL3-RBX1) E3 ubiquitin-protein ligase complexes containing homodimeric SPOPL or the heterodimer formed by SPOP and SPOPL are less efficient than ubiquitin ligase complexes containing only SPOP. May function to down-regulate the activity of cullin-RING-based BCR (BTB-CUL3-RBX1) E3 ubiquitin-protein ligase complexes that contain SPOP. The sequence is that of Speckle-type POZ protein-like (SPOPL) from Homo sapiens (Human).